We begin with the raw amino-acid sequence, 387 residues long: Protein REVEILLE 1 (387 aa).

Composition is skewed to polar residues over residues 1–17 (MASSPLTANVQGTNASL) and 27–37 (KQIQFNDQSFG). A disordered region spans residues 1–44 (MASSPLTANVQGTNASLRNRDEETADKQIQFNDQSFGGNDYAPK). The HTH myb-type domain maps to 50–104 (TITKERERWTDEEHKKFVEALKLYGRAWRRIEEHVGSKTAVQIRSHAQKFFSKVA). The segment at residues 77-100 (WRRIEEHVGSKTAVQIRSHAQKFF) is a DNA-binding region (H-T-H motif). 3 disordered regions span residues 105–200 (REAT…TANA), 306–334 (KAVQNEGSSTGSNTGSVDDTGHTEKTTEP), and 350–387 (AFSELRRTNSESNSRGFGPYKKRKMVTEEEEHEIHLHL). Basic residues predominate over residues 124 to 134 (RPKRKPAHPYP). The segment covering 141–166 (ADQTSRSVSPSERDTQSPTSVLSTVG) has biased composition (polar residues). Low complexity-rich tracts occupy residues 172–200 (SLDSSSPNRSLSPVSSASPPAALTTTANA) and 312–323 (GSSTGSNTGSVD). The segment covering 324–333 (DTGHTEKTTE) has biased composition (basic and acidic residues).

The protein localises to the nucleus. Its function is as follows. Morning-phased transcription factor integrating the circadian clock and auxin pathways. Binds to the evening element (EE) of promoters. Does not act within the central clock, but regulates free auxin levels in a time-of-day specific manner. Positively regulates the expression of YUC8 during the day, but has no effect during the night. Negative regulator of freezing tolerance. This Arabidopsis thaliana (Mouse-ear cress) protein is Protein REVEILLE 1 (RVE1).